Consider the following 718-residue polypeptide: Kinesin-like protein KIF2C (718 aa).

The interval 1–248 is globular; the sequence is MESLPARLFP…CHPLTLTDPT (248 aa). 2 positions are modified to phosphoserine: Ser3 and Ser19. Residues 86 to 111 are disordered; that stretch reads PKQKRRSVNSKIPAPKEGLRSRSTRM. The residue at position 92 (Ser92) is a Phosphoserine; by AURKB. The short motif at 95-98 is the Microtubule tip localization signal element; sequence SKIP. A phosphoserine mark is found at Ser106, Ser108, Ser112, Ser163, and Ser186. The tract at residues 201 to 232 is negative regulator of microtubule-binding; sequence EKRAQNSEIRIKRAQEYDSSFPNWEFARMIKE. In terms of domain architecture, Kinesin motor spans 252-582; that stretch reads RICVCVRKRP…LRYADRVKEL (331 aa). ATP-binding positions include Arg258 and 342 to 349; that span reads GQTGSGKT. Residues 409-412 carry the Nuclear localization signal motif; sequence KKAK. Phosphoserine is present on residues Ser513 and Ser626. Coiled-coil stretches lie at residues 613–651 and 689–716; these read NFKEEEELSSQMSSFNEAMSQIRELEERAMEELREIIQQ and ALREVIKALRVAMQLEEQASKQMNSKKR.

It belongs to the TRAFAC class myosin-kinesin ATPase superfamily. Kinesin family. MCAK/KIF2 subfamily. Interacts with CENPH. Interacts with MTUS2/TIP150; the interaction is direct. Interacts with MAPRE1; the interaction is direct, regulated by phosphorylation and is probably required for targeting to growing microtubule plus ends. Interacts with KIF18B at microtubule tips; this interaction increases the affinity of both partners for microtubule plus ends and is required for robust microtubule depolymerization. Phosphorylation by AURKA or AURKB strongly reduces KIF18B-binding. In terms of processing, phosphorylation by AURKB, regulates association with centromeres and kinetochores and the microtubule depolymerization activity. Ubiquitinated.

The protein localises to the cytoplasm. It is found in the cytoskeleton. The protein resides in the nucleus. Its subcellular location is the chromosome. It localises to the centromere. The protein localises to the kinetochore. Its function is as follows. In complex with KIF18B, constitutes the major microtubule plus-end depolymerizing activity in mitotic cells. Regulates the turnover of microtubules at the kinetochore and functions in chromosome segregation during mitosis. Plays a role in chromosome congression and is required for the lateral to end-on conversion of the chromosome-microtubule attachment. The protein is Kinesin-like protein KIF2C (KIF2C) of Cricetulus griseus (Chinese hamster).